A 264-amino-acid chain; its full sequence is ATP synthase subunit a (264 aa).

7 consecutive transmembrane segments (helical) span residues W30–Y50, I90–I110, P111–P131, D134–I154, I177–L197, L208–V228, and L235–V255.

It belongs to the ATPase A chain family. F-type ATPases have 2 components, CF(1) - the catalytic core - and CF(0) - the membrane proton channel. CF(1) has five subunits: alpha(3), beta(3), gamma(1), delta(1), epsilon(1). CF(0) has three main subunits: a(1), b(2) and c(9-12). The alpha and beta chains form an alternating ring which encloses part of the gamma chain. CF(1) is attached to CF(0) by a central stalk formed by the gamma and epsilon chains, while a peripheral stalk is formed by the delta and b chains.

It localises to the cell inner membrane. In terms of biological role, key component of the proton channel; it plays a direct role in the translocation of protons across the membrane. This Shewanella frigidimarina (strain NCIMB 400) protein is ATP synthase subunit a.